The sequence spans 341 residues: LIM and senescent cell antigen-like-containing domain protein 2 (341 aa).

LIM zinc-binding domains follow at residues 13–74, 76–133, 138–195, 196–255, and 256–315; these read AMCQ…LFAP, CGFC…EKAK, FICQ…KMGI, PICG…LFGD, and VCYN…FPLE. Phosphoserine is present on S328.

In terms of assembly, interacts with integrin-linked protein kinase 1 (ILK) via the first LIM domain, and in competition with LIMS1. Part of the heterotrimeric IPP complex composed of integrin-linked kinase (ILK), LIMS1 or LIMS2, and PARVA. Interacts with TGFB1I1. In terms of tissue distribution, detected in heart, lung, kidney, liver, urinary bladder, fat, skin, skeletal muscle, uterus, large intestine and testis.

The protein resides in the cell junction. It localises to the focal adhesion. The protein localises to the cell membrane. Functionally, adapter protein in a cytoplasmic complex linking beta-integrins to the actin cytoskeleton, bridges the complex to cell surface receptor tyrosine kinases and growth factor receptors. In Mus musculus (Mouse), this protein is LIM and senescent cell antigen-like-containing domain protein 2 (Lims2).